Reading from the N-terminus, the 436-residue chain is Xylose isomerase (436 aa).

Active-site residues include His-100 and Asp-103. Residues Glu-231, Glu-267, His-270, Asp-295, Asp-306, Asp-308, and Asp-338 each contribute to the Mg(2+) site.

This sequence belongs to the xylose isomerase family. In terms of assembly, homotetramer. The cofactor is Mg(2+).

The protein resides in the cytoplasm. The enzyme catalyses alpha-D-xylose = alpha-D-xylulofuranose. This chain is Xylose isomerase, found in Rhizobium etli (strain ATCC 51251 / DSM 11541 / JCM 21823 / NBRC 15573 / CFN 42).